The chain runs to 274 residues: Orotidine 5'-phosphate decarboxylase (274 aa).

Catalysis depends on Lys-95, which acts as the Proton donor.

It belongs to the OMP decarboxylase family. Type 2 subfamily.

It catalyses the reaction orotidine 5'-phosphate + H(+) = UMP + CO2. It functions in the pathway pyrimidine metabolism; UMP biosynthesis via de novo pathway; UMP from orotate: step 2/2. This is Orotidine 5'-phosphate decarboxylase from Mycobacterium avium (strain 104).